Reading from the N-terminus, the 116-residue chain is MRHQLRVPQLGRPADQRKALLRGLTTQLIREGRVTTTKTRAKALRDEVERMIGLAKDGSLAARRRAIGYIYDKKLVHSLFEKAQERYGDRQGGYTRIVRTVPRRGDNAEMAIIELV.

It belongs to the bacterial ribosomal protein bL17 family. Part of the 50S ribosomal subunit. Contacts protein L32.

The sequence is that of Large ribosomal subunit protein bL17 from Prochlorococcus marinus (strain SARG / CCMP1375 / SS120).